Reading from the N-terminus, the 841-residue chain is Putative helicase R592 (841 aa).

In terms of domain architecture, Helicase ATP-binding spans 72-309 (STFVIETNSA…RRYVNKIFGQ (238 aa)). ATP is bound at residue 85-92 (DKVGAGKT). The span at 195-205 (KLPVKTTKKGG) shows a compositional bias: basic residues. The segment at 195-215 (KLPVKTTKKGGSKTQNKAQND) is disordered. Residues 206–215 (SKTQNKAQND) are compositionally biased toward polar residues. The DEAD box signature appears at 266–269 (DEMD). The stretch at 413–450 (QDVDAHENRKKNIMNNIARCKTKLESIKEKINSIKDEC) forms a coiled coil. Residues 451-491 (CFICTDPFENPTIMNCCKSIFCLKCLLTTLKTVGSKCPYCR) form an RING-type; degenerate zinc finger. Residues 531–682 (VLEQVLSYIS…WMITNPTDLN (152 aa)) enclose the Helicase C-terminal domain. Positions 678 to 841 (PTDLNEEPDE…KAPVRKLIKV (164 aa)) are disordered. Acidic residues predominate over residues 681-697 (LNEEPDEESDEGSDEDV). A compositionally biased stretch (basic and acidic residues) spans 698–725 (EKSKDKKSSDKKSSDKKKSEKKSSDKKS). Positions 726-749 (SNKKNSKKKTYVKPKSSKKTSQKV) are enriched in basic residues. Acidic residues-rich tracts occupy residues 765–774 (DSDDLDDSDD) and 782–804 (SDSD…ESEI). 2 stretches are compositionally biased toward basic residues: residues 809–821 (KSKK…KKNK) and 828–841 (TLKK…LIKV).

This chain is Putative helicase R592, found in Acanthamoeba polyphaga mimivirus (APMV).